The sequence spans 185 residues: DNA-directed RNA polymerase 22 kDa subunit (185 aa).

This sequence belongs to the poxviridae DNA-directed RNA polymerase 22 kDa subunit family. As to quaternary structure, the DNA-dependent RNA polymerase used for intermediate and late genes expression consists of eight subunits Rpo30/OPG66, Rpo7/OPG90, Rpo22/OPG103, Rpo147/OPG105, Rpo18/OPG119, Rpo19/OPG131, Rpo132/OPG151 and Rpo35/OPG156. The same holoenzyme, with the addition of the transcription-specificity factor OPG109, is used for early gene expression.

The protein resides in the virion. The enzyme catalyses RNA(n) + a ribonucleoside 5'-triphosphate = RNA(n+1) + diphosphate. In terms of biological role, part of the DNA-dependent RNA polymerase which catalyzes the transcription of viral DNA into RNA using the four ribonucleoside triphosphates as substrates. Responsible for the transcription of early, intermediate and late genes. DNA-dependent RNA polymerase associates with the early transcription factor (ETF), itself composed of OPG118 and OPG133, thereby allowing the early genes transcription. Late transcription, and probably also intermediate transcription, require newly synthesized RNA polymerase. The protein is DNA-directed RNA polymerase 22 kDa subunit (OPG103) of Cynomys gunnisoni (Gunnison's prairie dog).